The chain runs to 228 residues: 7-cyano-7-deazaguanine synthase (228 aa).

Position 9–19 (9–19 (YSGGLDSTTCM)) interacts with ATP. Zn(2+) contacts are provided by Cys-189, Cys-199, Cys-202, and Cys-205.

It belongs to the QueC family. Requires Zn(2+) as cofactor.

It carries out the reaction 7-carboxy-7-deazaguanine + NH4(+) + ATP = 7-cyano-7-deazaguanine + ADP + phosphate + H2O + H(+). The protein operates within purine metabolism; 7-cyano-7-deazaguanine biosynthesis. In terms of biological role, catalyzes the ATP-dependent conversion of 7-carboxy-7-deazaguanine (CDG) to 7-cyano-7-deazaguanine (preQ(0)). The sequence is that of 7-cyano-7-deazaguanine synthase from Geotalea uraniireducens (strain Rf4) (Geobacter uraniireducens).